We begin with the raw amino-acid sequence, 252 residues long: AA9 family lytic polysaccharide monooxygenase B (252 aa).

An N-terminal signal peptide occupies residues 1 to 20 (MVSFTKTFFAIVACALGVQA). Residues histidine 21 and histidine 106 each contribute to the Cu(2+) site. An intrachain disulfide couples cysteine 72 to cysteine 198. A glycan (N-linked (GlcNAc...) asparagine) is linked at asparagine 158. O2 contacts are provided by histidine 184 and glutamine 193. Tyrosine 195 lines the Cu(2+) pocket. A glycan (N-linked (GlcNAc...) asparagine) is linked at asparagine 237.

Belongs to the polysaccharide monooxygenase AA9 family. Cu(2+) serves as cofactor.

Its subcellular location is the secreted. It carries out the reaction [(1-&gt;4)-beta-D-glucosyl]n+m + reduced acceptor + O2 = 4-dehydro-beta-D-glucosyl-[(1-&gt;4)-beta-D-glucosyl]n-1 + [(1-&gt;4)-beta-D-glucosyl]m + acceptor + H2O.. Lytic polysaccharide monooxygenase (LPMO) that depolymerizes crystalline and amorphous polysaccharides via the oxidation of scissile alpha- or beta-(1-4)-glycosidic bonds, yielding C1 or C4 oxidation products. Catalysis by LPMOs requires the reduction of the active-site copper from Cu(II) to Cu(I) by a reducing agent and H(2)O(2) or O(2) as a cosubstrate. The synergistic activity of LPMO9B with xylanase Xyl10G or cellulase Cel5B shows efficient bioconversion rates of 56 and 174 percent in pretreated kenaf (Hibiscus cannabinus) and oak, respectively. The polypeptide is AA9 family lytic polysaccharide monooxygenase B (Gloeophyllum trabeum (strain ATCC 11539 / FP-39264 / Madison 617) (Brown rot fungus)).